The following is a 345-amino-acid chain: Ferrochelatase (345 aa).

Fe cation contacts are provided by His-215 and Glu-296.

This sequence belongs to the ferrochelatase family.

The protein localises to the cytoplasm. It carries out the reaction heme b + 2 H(+) = protoporphyrin IX + Fe(2+). Its pathway is porphyrin-containing compound metabolism; protoheme biosynthesis; protoheme from protoporphyrin-IX: step 1/1. Its function is as follows. Catalyzes the ferrous insertion into protoporphyrin IX. The protein is Ferrochelatase of Nitrobacter hamburgensis (strain DSM 10229 / NCIMB 13809 / X14).